We begin with the raw amino-acid sequence, 831 residues long: G-type lectin S-receptor-like serine/threonine-protein kinase At1g61390 (831 aa).

A signal peptide spans 1-42 (MYKLPQRNCADKQEYTVHMRKMGMVIFACLLLLIIFPTFGYA). A Bulb-type lectin domain is found at 43–162 (DINTSSPLSI…VSGKTLWKSF (120 aa)). Residues 43 to 448 (DINTSSPLSI…SSELAGSNRT (406 aa)) lie on the Extracellular side of the membrane. N-linked (GlcNAc...) asparagine glycosylation is found at N45, N71, N106, and N112. The EGF-like; atypical domain maps to 298–334 (PTSSCDLYRACGPFGLCVRSRNPKCICLKGFVPKSDD). Intrachain disulfides connect C302–C314 and C308–C322. N-linked (GlcNAc...) asparagine glycosylation is found at N340, N356, N399, and N446. A PAN domain is found at 353–439 (CHTNSSTKTQ…GESLSLRLAS (87 aa)). 2 cysteine pairs are disulfide-bonded: C392–C413 and C396–C402. The helical transmembrane segment at 449–469 (KIILGTTVSLSIFVILVFAAY) threads the bilayer. At 470–831 (KSWRYRTKQN…EITQSVIQGR (362 aa)) the chain is on the cytoplasmic side. A Protein kinase domain is found at 520–803 (FSSSNKLGQG…ELPSPKQPTF (284 aa)). Residues 526–534 (LGQGGFGPV) and K548 each bind ATP. Phosphoserine is present on residues S554 and S569. The segment at 609–626 (TLKFEIDWQKRFNIIQGV) is caM-binding. Catalysis depends on D645, which acts as the Proton acceptor. Residues S649 and S662 each carry the phosphoserine modification. Residue T679 is modified to Phosphothreonine. Residues S722 and S814 each carry the phosphoserine modification.

It belongs to the protein kinase superfamily. Ser/Thr protein kinase family.

The protein resides in the cell membrane. It carries out the reaction L-seryl-[protein] + ATP = O-phospho-L-seryl-[protein] + ADP + H(+). It catalyses the reaction L-threonyl-[protein] + ATP = O-phospho-L-threonyl-[protein] + ADP + H(+). The chain is G-type lectin S-receptor-like serine/threonine-protein kinase At1g61390 from Arabidopsis thaliana (Mouse-ear cress).